Consider the following 306-residue polypeptide: Protein-methionine-sulfoxide reductase catalytic subunit MsrP (306 aa).

The segment at residues 1 to 45 (MLIRHAPDLTDNDVTDHSLYLKRRTLMAGVAGLGVAGASASHAQA) is a signal peptide (tat-type signal). Mo-molybdopterin-binding positions include N69, 72–73 (YE), C127, T162, N210, R215, and 226–228 (GIK).

The protein belongs to the MsrP family. As to quaternary structure, heterodimer of a catalytic subunit (MsrP) and a heme-binding subunit (MsrQ). The cofactor is Mo-molybdopterin. Post-translationally, predicted to be exported by the Tat system. The position of the signal peptide cleavage has not been experimentally proven.

It localises to the periplasm. The enzyme catalyses L-methionyl-[protein] + a quinone + H2O = L-methionyl-(S)-S-oxide-[protein] + a quinol. It catalyses the reaction L-methionyl-[protein] + a quinone + H2O = L-methionyl-(R)-S-oxide-[protein] + a quinol. In terms of biological role, part of the MsrPQ system that repairs oxidized periplasmic proteins containing methionine sulfoxide residues (Met-O), using respiratory chain electrons. Thus protects these proteins from oxidative-stress damage caused by reactive species of oxygen and chlorine generated by the host defense mechanisms. MsrPQ is essential for the maintenance of envelope integrity under bleach stress, rescuing a wide series of structurally unrelated periplasmic proteins from methionine oxidation. The catalytic subunit MsrP is non-stereospecific, being able to reduce both (R-) and (S-) diastereoisomers of methionine sulfoxide. In Caulobacter vibrioides (strain ATCC 19089 / CIP 103742 / CB 15) (Caulobacter crescentus), this protein is Protein-methionine-sulfoxide reductase catalytic subunit MsrP.